The sequence spans 632 residues: Transcription factor asR4 (632 aa).

Residues 26 to 52 (CDSCNKSKTKCPGGNPCPLCQCSGIRC) constitute a DNA-binding region (zn(2)-C6 fungal-type). The segment covering 101–111 (HISSNPSPVGS) has biased composition (polar residues). Disordered stretches follow at residues 101–129 (HISS…QQQQ), 270–311 (SNEY…GDGH), and 324–356 (TSAS…VPRT). The span at 112–129 (QSQQQQHPQQAGQQQQQQ) shows a compositional bias: low complexity. Polar residues-rich tracts occupy residues 270 to 286 (SNEY…TTDD), 294 to 306 (PDSS…SSSV), and 329 to 340 (IVEQQSIPTSPV).

It is found in the nucleus. Transcription factor; part of the gene cluster that mediates the biosynthesis of xenovulene A, an unusual meroterpenoid that has potent inhibitory effects on the human gamma-aminobutyrate A (GABAA) benzodiazepine receptor. This chain is Transcription factor asR4, found in Sarocladium schorii (Acremonium strictum (strain IMI 501407)).